The sequence spans 294 residues: Probable 2-(5''-triphosphoribosyl)-3'-dephosphocoenzyme-A synthase (294 aa).

Belongs to the CitG/MdcB family.

The catalysed reaction is 3'-dephospho-CoA + ATP = 2'-(5''-triphospho-alpha-D-ribosyl)-3'-dephospho-CoA + adenine. The sequence is that of Probable 2-(5''-triphosphoribosyl)-3'-dephosphocoenzyme-A synthase from Streptococcus pyogenes serotype M49 (strain NZ131).